The sequence spans 166 residues: Sec-independent protein translocase protein TatB (166 aa).

The chain crosses the membrane as a helical span at residues 2–22 (FDGIGFMELLLIGVLGLVVLG). The segment at 69 to 166 (SKGLSNLSPE…DTRSNPKANG (98 aa)) is disordered. Polar residues-rich tracts occupy residues 88–97 (QAAQSVNRPY) and 112–132 (QIYS…SQAN). Over residues 133–153 (PTATVEASPAPASPATPSEPS) the composition is skewed to low complexity. Over residues 155 to 166 (GADTRSNPKANG) the composition is skewed to polar residues.

The protein belongs to the TatB family. The Tat system comprises two distinct complexes: a TatABC complex, containing multiple copies of TatA, TatB and TatC subunits, and a separate TatA complex, containing only TatA subunits. Substrates initially bind to the TatABC complex, which probably triggers association of the separate TatA complex to form the active translocon.

The protein resides in the cell inner membrane. Part of the twin-arginine translocation (Tat) system that transports large folded proteins containing a characteristic twin-arginine motif in their signal peptide across membranes. Together with TatC, TatB is part of a receptor directly interacting with Tat signal peptides. TatB may form an oligomeric binding site that transiently accommodates folded Tat precursor proteins before their translocation. The polypeptide is Sec-independent protein translocase protein TatB (Shewanella baltica (strain OS155 / ATCC BAA-1091)).